The chain runs to 278 residues: Protoheme IX farnesyltransferase (278 aa).

The next 9 membrane-spanning stretches (helical) occupy residues 12 to 32 (VIWLLILSSVVGYIYAAQTVD), 33 to 53 (WSKLIALIAVATLAVGGSAAF), 83 to 103 (ALVYSLALSAAGITLSFYLLG), 105 to 125 (LPGLFVALGWFFYAVVYTIWL), 130 to 150 (WLNILGGGFAGNATFLGGYAL), 157 to 177 (LPAVLISFAIYLWIPSHIWAL), 204 to 224 (VIISILNIASAVYILWLYLAF), 228 to 248 (LLGLALVFAGVAGTVATSILA), and 257 to 277 (MWKMYKASSPILTLFLLALVF).

It belongs to the UbiA prenyltransferase family. Protoheme IX farnesyltransferase subfamily.

It is found in the cell membrane. The enzyme catalyses heme b + (2E,6E)-farnesyl diphosphate + H2O = Fe(II)-heme o + diphosphate. The protein operates within porphyrin-containing compound metabolism; heme O biosynthesis; heme O from protoheme: step 1/1. Its function is as follows. Converts heme B (protoheme IX) to heme O by substitution of the vinyl group on carbon 2 of heme B porphyrin ring with a hydroxyethyl farnesyl side group. In Pyrobaculum islandicum (strain DSM 4184 / JCM 9189 / GEO3), this protein is Protoheme IX farnesyltransferase.